The primary structure comprises 409 residues: Elongation factor Tu (409 aa).

In terms of domain architecture, tr-type G spans 10–214 (KPHVNIGTIG…AVDDNIPEPE (205 aa)). The G1 stretch occupies residues 19–26 (GHVDHGKT). Position 19 to 26 (19 to 26 (GHVDHGKT)) interacts with GTP. Residue threonine 26 coordinates Mg(2+). Positions 60–64 (GITIN) are G2. The G3 stretch occupies residues 81 to 84 (DCPG). GTP contacts are provided by residues 81–85 (DCPGH) and 136–139 (NKKD). Residues 136–139 (NKKD) are G4. Residues 174-176 (SAL) are G5.

It belongs to the TRAFAC class translation factor GTPase superfamily. Classic translation factor GTPase family. EF-Tu/EF-1A subfamily. As to quaternary structure, monomer.

It is found in the cytoplasm. The enzyme catalyses GTP + H2O = GDP + phosphate + H(+). In terms of biological role, GTP hydrolase that promotes the GTP-dependent binding of aminoacyl-tRNA to the A-site of ribosomes during protein biosynthesis. The protein is Elongation factor Tu of Crocosphaera subtropica (strain ATCC 51142 / BH68) (Cyanothece sp. (strain ATCC 51142)).